A 413-amino-acid polypeptide reads, in one-letter code: Coiled-coil domain-containing protein 83 (413 aa).

A disordered region spans residues 1–21 (MENSGKANKKDTHDGPPKEIK). The segment covering 8–21 (NKKDTHDGPPKEIK) has biased composition (basic and acidic residues). 2 coiled-coil regions span residues 37 to 184 (EDAV…RKKI) and 216 to 256 (WEND…LSNC).

The polypeptide is Coiled-coil domain-containing protein 83 (CCDC83) (Homo sapiens (Human)).